The chain runs to 167 residues: MMINEQIRAREVRLVGANGDQLGIKSRNDALDLAANLNLDLVLVAPNAKPPVCRIMDYGKFRFEQQKKEKEQRKNQKVISMKEVRLSPTIDEHDFNTKLRNAIKFLEKGDKVKASIRFKGRAITHKEIGQRVLDRFSEACAEVSTIESKPKMEGRSMFLVLAPKNDK.

Belongs to the IF-3 family. In terms of assembly, monomer.

It localises to the cytoplasm. IF-3 binds to the 30S ribosomal subunit and shifts the equilibrium between 70S ribosomes and their 50S and 30S subunits in favor of the free subunits, thus enhancing the availability of 30S subunits on which protein synthesis initiation begins. The chain is Translation initiation factor IF-3 from Bacillus anthracis.